Here is a 275-residue protein sequence, read N- to C-terminus: NH(3)-dependent NAD(+) synthetase (275 aa).

47-54 (GMSGGQDS) lines the ATP pocket. A Mg(2+)-binding site is contributed by D53. R141 contributes to the deamido-NAD(+) binding site. T161 serves as a coordination point for ATP. Residue E166 coordinates Mg(2+). Deamido-NAD(+)-binding residues include K174 and D181. K190 and T212 together coordinate ATP. Residue 261-262 (HK) coordinates deamido-NAD(+).

It belongs to the NAD synthetase family. Homodimer.

It catalyses the reaction deamido-NAD(+) + NH4(+) + ATP = AMP + diphosphate + NAD(+) + H(+). It functions in the pathway cofactor biosynthesis; NAD(+) biosynthesis; NAD(+) from deamido-NAD(+) (ammonia route): step 1/1. Catalyzes the ATP-dependent amidation of deamido-NAD to form NAD. Uses ammonia as a nitrogen source. The chain is NH(3)-dependent NAD(+) synthetase from Oceanobacillus iheyensis (strain DSM 14371 / CIP 107618 / JCM 11309 / KCTC 3954 / HTE831).